A 268-amino-acid chain; its full sequence is Casein kinase II subunit beta (268 aa).

A disordered region spans residues 222 to 268 (LSNNNQNNQNNNINNNNNNNNNNNNNNNNNNNNQQNNNNQQNNNTNK). The segment covering 224-268 (NNNQNNQNNNINNNNNNNNNNNNNNNNNNNNQQNNNNQQNNNTNK) has biased composition (low complexity).

Belongs to the casein kinase 2 subunit beta family. Casein kinase II/CK2 is a tetramer composed of two alpha subunit and two beta subunits.

In terms of biological role, regulatory subunit of casein kinase II/CK2. As part of the kinase complex regulates the basal catalytic activity of the alpha subunit a constitutively active serine/threonine-protein kinase that phosphorylates a large number of substrates containing acidic residues C-terminal to the phosphorylated serine or threonine. The polypeptide is Casein kinase II subunit beta (csnk2b) (Dictyostelium discoideum (Social amoeba)).